A 436-amino-acid chain; its full sequence is 3-ketoacyl-CoA thiolase (436 aa).

C99 functions as the Acyl-thioester intermediate in the catalytic mechanism. Catalysis depends on proton acceptor residues H392 and C422.

The protein belongs to the thiolase-like superfamily. Thiolase family. Heterotetramer of two alpha chains (FadJ) and two beta chains (FadI).

Its subcellular location is the cytoplasm. It carries out the reaction an acyl-CoA + acetyl-CoA = a 3-oxoacyl-CoA + CoA. Its pathway is lipid metabolism; fatty acid beta-oxidation. In terms of biological role, catalyzes the final step of fatty acid oxidation in which acetyl-CoA is released and the CoA ester of a fatty acid two carbons shorter is formed. This chain is 3-ketoacyl-CoA thiolase, found in Escherichia coli (strain K12 / MC4100 / BW2952).